A 198-amino-acid polypeptide reads, in one-letter code: Na(+)-translocating NADH-quinone reductase subunit E (198 aa).

6 helical membrane passes run 11-31 (SIFI…FLAV), 39-59 (FGLG…NNLV), 77-97 (FLNF…LEMI), 110-130 (GIFL…SFMV), 140-160 (IVYG…LAGI), and 176-196 (LGIT…FSGV).

It belongs to the NqrDE/RnfAE family. As to quaternary structure, composed of six subunits; NqrA, NqrB, NqrC, NqrD, NqrE and NqrF.

The protein resides in the cell inner membrane. The catalysed reaction is a ubiquinone + n Na(+)(in) + NADH + H(+) = a ubiquinol + n Na(+)(out) + NAD(+). In terms of biological role, NQR complex catalyzes the reduction of ubiquinone-1 to ubiquinol by two successive reactions, coupled with the transport of Na(+) ions from the cytoplasm to the periplasm. NqrA to NqrE are probably involved in the second step, the conversion of ubisemiquinone to ubiquinol. The chain is Na(+)-translocating NADH-quinone reductase subunit E from Photobacterium profundum (strain SS9).